The following is a 365-amino-acid chain: MPRPILATIHPAAVHHNLERARRAAPDARVWAVVKANAYGHGIERVFEGLRAADGFALLDLAEAERVRALGWRGPILLLEGVFEPRDLELCSRLGLWHAVHCDAQIDWLAAHKTQVPHRVFLKMNSGMNRLGFTPERYRSAWARLNALPQVDEISCMTHFSDADGPRGIAHQVQAFQAATQDLPGERCIANSAALLRHGGDAQVRLDWVRAGIVLYGSAPDHPERRAADWDLQPTMTLASRIIGVQQLQAGDTVGYGSRFTAQGPLGIGIVACGYADGYPRHCDTGTPVLVNGVRTRTIGRVSMDMLAVDLTPVPGAGLGAEVTLWGRAANGAVLPIDEVAQAGGTIGYELMCALAPRVPVVVQD.

Catalysis depends on Lys-35, which acts as the Proton acceptor; specific for D-alanine. Lys-35 is modified (N6-(pyridoxal phosphate)lysine). Arg-130 provides a ligand contact to substrate. Tyr-256 serves as the catalytic Proton acceptor; specific for L-alanine. Met-304 is a binding site for substrate.

The protein belongs to the alanine racemase family. The cofactor is pyridoxal 5'-phosphate.

The catalysed reaction is L-alanine = D-alanine. It functions in the pathway amino-acid biosynthesis; D-alanine biosynthesis; D-alanine from L-alanine: step 1/1. In terms of biological role, catalyzes the interconversion of L-alanine and D-alanine. May also act on other amino acids. This is Alanine racemase (alr) from Acidovorax sp. (strain JS42).